A 349-amino-acid chain; its full sequence is Farnesyl pyrophosphate synthase (349 aa).

K48, R51, and Q90 together coordinate isopentenyl diphosphate. Positions 97 and 101 each coordinate Mg(2+). Residue R106 coordinates dimethylallyl diphosphate. R107 provides a ligand contact to isopentenyl diphosphate. Dimethylallyl diphosphate is bound by residues K194, T195, Q234, K251, and K260.

It belongs to the FPP/GGPP synthase family. The cofactor is Mg(2+).

Its subcellular location is the cytoplasm. It catalyses the reaction isopentenyl diphosphate + dimethylallyl diphosphate = (2E)-geranyl diphosphate + diphosphate. It carries out the reaction isopentenyl diphosphate + (2E)-geranyl diphosphate = (2E,6E)-farnesyl diphosphate + diphosphate. It functions in the pathway isoprenoid biosynthesis; farnesyl diphosphate biosynthesis; farnesyl diphosphate from geranyl diphosphate and isopentenyl diphosphate: step 1/1. Its pathway is isoprenoid biosynthesis; geranyl diphosphate biosynthesis; geranyl diphosphate from dimethylallyl diphosphate and isopentenyl diphosphate: step 1/1. Its function is as follows. Catalyzes the sequential condensation of isopentenyl pyrophosphate with the allylic pyrophosphates, dimethylallyl pyrophosphate, and then with the resultant geranylpyrophosphate to the ultimate product farnesyl pyrophosphate. The protein is Farnesyl pyrophosphate synthase (FPS1) of Kluyveromyces lactis (strain ATCC 8585 / CBS 2359 / DSM 70799 / NBRC 1267 / NRRL Y-1140 / WM37) (Yeast).